The chain runs to 400 residues: Serpin E3 (400 aa).

The N-terminal stretch at 1-19 (MQSLLLALLLLPVCSPGGA) is a signal peptide. A glycan (N-linked (GlcNAc...) asparagine) is linked at N46.

Belongs to the serpin family.

Its subcellular location is the secreted. Its function is as follows. Probable serine protease inhibitor. This Bos taurus (Bovine) protein is Serpin E3 (SERPINE3).